A 297-amino-acid chain; its full sequence is Undecaprenyl-diphosphatase (297 aa).

7 helical membrane-spanning segments follow: residues 39–59, 85–105, 113–133, 151–171, 190–210, 220–240, and 249–269; these read PGAA…LIYF, ARLA…GLTL, FRSL…LLVV, GILI…RSGT, SFLL…KHLL, ALWV…AWLL, and LVFV…LQTG.

It belongs to the UppP family.

It localises to the cell inner membrane. It catalyses the reaction di-trans,octa-cis-undecaprenyl diphosphate + H2O = di-trans,octa-cis-undecaprenyl phosphate + phosphate + H(+). Its function is as follows. Catalyzes the dephosphorylation of undecaprenyl diphosphate (UPP). Confers resistance to bacitracin. The polypeptide is Undecaprenyl-diphosphatase (Myxococcus xanthus (strain DK1622)).